The sequence spans 140 residues: Oocyte zinc finger protein XlCOF15 (140 aa).

5 C2H2-type zinc fingers span residues 6-28 (FTCK…QKIH), 34-56 (FTCT…QKVH), 62-84 (FICT…HVIH), 90-112 (FTCA…RAAH), and 118-140 (FICT…LKSH).

This sequence belongs to the krueppel C2H2-type zinc-finger protein family.

It localises to the nucleus. In terms of biological role, may be involved in transcriptional regulation. The polypeptide is Oocyte zinc finger protein XlCOF15 (Xenopus laevis (African clawed frog)).